An 88-amino-acid chain; its full sequence is Hemotin (88 aa).

The Lumenal portion of the chain corresponds to M1–E14. A helical membrane pass occupies residues I15–H37. The Cytoplasmic portion of the chain corresponds to G38 to Y88.

Interacts with 14-3-3zeta. As to expression, expressed in hemocytes.

The protein localises to the early endosome membrane. In terms of biological role, negatively regulates early endosome maturation by binding to and repressing the activity of 14-3-3zeta which prevents the 14-3-3zeta-mediated activation of phosphoinositide 3-kinase Pi3K68D. This, in turn, inhibits the Pi3K68D-mediated conversion of phosphatidylinositol to phosphatidylinositol-3-phosphate and prevents progression of early endosomes through the maturation process which regulates subsequent steps of phagocytic processing. The sequence is that of Hemotin from Drosophila melanogaster (Fruit fly).